Here is a 407-residue protein sequence, read N- to C-terminus: Arginine biosynthesis bifunctional protein ArgJ (407 aa).

The substrate site is built by T155, K181, T192, E278, N402, and T407. The active-site Nucleophile is the T192.

This sequence belongs to the ArgJ family. In terms of assembly, heterotetramer of two alpha and two beta chains.

Its subcellular location is the cytoplasm. The enzyme catalyses N(2)-acetyl-L-ornithine + L-glutamate = N-acetyl-L-glutamate + L-ornithine. The catalysed reaction is L-glutamate + acetyl-CoA = N-acetyl-L-glutamate + CoA + H(+). It functions in the pathway amino-acid biosynthesis; L-arginine biosynthesis; L-ornithine and N-acetyl-L-glutamate from L-glutamate and N(2)-acetyl-L-ornithine (cyclic): step 1/1. Its pathway is amino-acid biosynthesis; L-arginine biosynthesis; N(2)-acetyl-L-ornithine from L-glutamate: step 1/4. Functionally, catalyzes two activities which are involved in the cyclic version of arginine biosynthesis: the synthesis of N-acetylglutamate from glutamate and acetyl-CoA as the acetyl donor, and of ornithine by transacetylation between N(2)-acetylornithine and glutamate. The polypeptide is Arginine biosynthesis bifunctional protein ArgJ (Thiobacillus denitrificans (strain ATCC 25259 / T1)).